Consider the following 508-residue polypeptide: Photosystem II CP47 reaction center protein (508 aa).

6 helical membrane passes run 21-36 (AVHL…WAGS), 101-115 (ILLS…IWHW), 140-156 (GIHL…FGAF), 203-218 (IAAG…FHLS), 237-252 (VLSS…AFVV), and 457-472 (WFAL…HGAR).

This sequence belongs to the PsbB/PsbC family. PsbB subfamily. As to quaternary structure, PSII is composed of 1 copy each of membrane proteins PsbA, PsbB, PsbC, PsbD, PsbE, PsbF, PsbH, PsbI, PsbJ, PsbK, PsbL, PsbM, PsbT, PsbX, PsbY, PsbZ, Psb30/Ycf12, at least 3 peripheral proteins of the oxygen-evolving complex and a large number of cofactors. It forms dimeric complexes. Binds multiple chlorophylls. PSII binds additional chlorophylls, carotenoids and specific lipids. serves as cofactor.

The protein localises to the plastid. The protein resides in the chloroplast thylakoid membrane. In terms of biological role, one of the components of the core complex of photosystem II (PSII). It binds chlorophyll and helps catalyze the primary light-induced photochemical processes of PSII. PSII is a light-driven water:plastoquinone oxidoreductase, using light energy to abstract electrons from H(2)O, generating O(2) and a proton gradient subsequently used for ATP formation. This chain is Photosystem II CP47 reaction center protein, found in Nephroselmis olivacea (Green alga).